The following is a 160-amino-acid chain: Transcription elongation factor GreA (160 aa).

Residues 2–30 (SEKTYPMTLAEKEQLEQELEELKLVRRPE) adopt a coiled-coil conformation.

It belongs to the GreA/GreB family.

Its function is as follows. Necessary for efficient RNA polymerase transcription elongation past template-encoded arresting sites. The arresting sites in DNA have the property of trapping a certain fraction of elongating RNA polymerases that pass through, resulting in locked ternary complexes. Cleavage of the nascent transcript by cleavage factors such as GreA or GreB allows the resumption of elongation from the new 3'terminus. GreA releases sequences of 2 to 3 nucleotides. This Streptococcus mutans serotype c (strain ATCC 700610 / UA159) protein is Transcription elongation factor GreA.